A 273-amino-acid chain; its full sequence is uncharacterized protein (273 aa).

This is an uncharacterized protein from Acheta domesticus (House cricket).